A 427-amino-acid polypeptide reads, in one-letter code: Inward rectifier potassium channel 2 (427 aa).

Topologically, residues 1–81 (MGSVRTNRYS…IFTTCVDIRW (81 aa)) are cytoplasmic. A helical membrane pass occupies residues 82–106 (RWMLVIFCLTFILSWLFFGCVFWLI). Over 107 to 128 (ALLHGDLENQENNKPCVSQVSS) the chain is Extracellular. An intramembrane region (helical; Pore-forming) is located at residues 129-140 (FTAAFLFSIETQ). The segment at residues 141-147 (TTIGYGF) is an intramembrane region (pore-forming). Residues 142 to 147 (TIGYGF) carry the Selectivity filter motif. The Extracellular portion of the chain corresponds to 148-156 (RCVTDECPI). The chain crosses the membrane as a helical span at residues 157–178 (AVFMVVFQSIVGCIIDAFIIGA). Residues 179 to 427 (VMAKMAKPKK…PRPLRRESEI (249 aa)) lie on the Cytoplasmic side of the membrane. The interval 181 to 208 (AKMAKPKKRNETLVFSHNAVVAMRDGKL) is polyphosphoinositide (PIP2)-binding. The disordered stretch occupies residues 386–427 (EEDEIDTGVPESTSTDTHPDMDHHNQAGVPLEPRPLRRESEI). The PDZ-binding motif lies at 425-427 (SEI).

It belongs to the inward rectifier-type potassium channel (TC 1.A.2.1) family. KCNJ2 subfamily. As to quaternary structure, homotetramer. Homomultimeric and heteromultimeric association with KCNJ4/Kir2.3, resulting in an enhanced G-protein-induced current. Associates, via its PDZ-recognition domain, with a complex containing LIN7A, LIN7B, LIN7C, DLG1, CASK and APBA1. As to expression, found in the apical basilar papilla of the inner ear, brain, muscle, cerebellum, heart and liver.

Its subcellular location is the cell membrane. It is found in the sarcolemma. The protein localises to the T-tubule. It catalyses the reaction K(+)(in) = K(+)(out). With respect to regulation, activated by phosphatidylinositol 4,5 biphosphate (PtdIns(4,5)P2). Functionally, inward rectifier potassium channels are characterized by a greater tendency to allow potassium to flow into the cell rather than out of it. Their voltage dependence is regulated by the concentration of extracellular potassium; as external potassium is raised, the voltage range of the channel opening shifts to more positive voltages. The inward rectification is mainly due to the blockage of outward current by internal magnesium. Can be blocked by external barium. Probably participates in establishing action potential waveform and excitability of neuronal and muscle tissues. This Gallus gallus (Chicken) protein is Inward rectifier potassium channel 2 (KCNJ2).